The following is a 455-amino-acid chain: Beta-1,4-mannosyltransferase bre-3 (455 aa).

Belongs to the glycosyltransferase 2 family. In terms of tissue distribution, endothelial cells.

The protein resides in the cytoplasm. It participates in protein modification; protein glycosylation. In terms of biological role, glycosyltransferase with a proposed role in glycosphingolipid biosynthesis. Involved in susceptibility to pore-forming crystal toxins in conjunction with bre-1, bre-2, bre-4 and bre-5. Involved in resistance to the nematotoxic C.cinerea galectin Cgl2. Has a role in determining brood size. The protein is Beta-1,4-mannosyltransferase bre-3 (bre-3) of Caenorhabditis elegans.